The chain runs to 295 residues: Aquaporin-9 (295 aa).

The Cytoplasmic portion of the chain corresponds to Met-1–Lys-24. A helical membrane pass occupies residues Glu-25–Ser-43. Residues Ile-44–Ile-57 are Extracellular-facing. The helical transmembrane segment at Ile-58–Gly-77 threads the bilayer. At Val-78–Ser-79 the chain is on the cytoplasmic side. Positions Gly-80–Cys-92 form an intramembrane region, discontinuously helical. The NPA 1 signature appears at Asn-84–Ala-86. The Cytoplasmic portion of the chain corresponds to Thr-93–Glu-98. The helical transmembrane segment at Trp-99 to Ile-123 threads the bilayer. Topologically, residues Tyr-124 to Gly-160 are extracellular. A helical membrane pass occupies residues Ala-161–Ala-178. At Ile-179 to Gly-190 the chain is on the cytoplasmic side. Residues Leu-191–Leu-207 traverse the membrane as a helical segment. Residues Gly-208–Asn-210 lie on the Extracellular side of the membrane. The segment at residues Ser-211 to Leu-225 is an intramembrane region (discontinuously helical). The NPA 2 motif lies at Asn-216–Ala-218. Topologically, residues Phe-226–Phe-243 are extracellular. A helical transmembrane segment spans residues Trp-244–Leu-264. Residues Phe-265–Met-295 lie on the Cytoplasmic side of the membrane.

It belongs to the MIP/aquaporin (TC 1.A.8) family. Homotetramer; each monomer provides an independent glycerol/water pore.

It is found in the cell membrane. Its subcellular location is the basolateral cell membrane. The catalysed reaction is glycerol(in) = glycerol(out). It carries out the reaction H2O(in) = H2O(out). The enzyme catalyses urea(in) = urea(out). It catalyses the reaction (S)-lactate(in) = (S)-lactate(out). The catalysed reaction is NH4(+)(in) = NH4(+)(out). It carries out the reaction uracil(in) = uracil(out). The enzyme catalyses adenine(out) = adenine(in). It catalyses the reaction 3-hydroxybutanoate(in) = 3-hydroxybutanoate(out). The catalysed reaction is D-sorbitol(in) = D-sorbitol(out). It carries out the reaction D-mannitol(in) = D-mannitol(out). The enzyme catalyses H2O2(out) = H2O2(in). It catalyses the reaction arsenite(in) = arsenite(out). The catalysed reaction is selenite(in) = selenite(out). Its function is as follows. Aquaglyceroporins form homotetrameric transmembrane channels, with each monomer independently mediating glycerol and water transport across the plasma membrane along their osmotic gradient. AQP9 is the primary route for glycerol uptake in hepatocytes, supporting hepatic gluconeogenesis. It exhibits broad specificity and may transport various small, non-charged solutes, including carbamides, polyols, purines, and pyrimidines. AQP9 may also facilitate hepatic urea extrusion. Due to its permeability to lactate, AQP9 might participate in the astrocyte-to-neuron lactate shuttle, supplying neurons with energy. Additionally, AQP9 is permeable to arsenite, contributing to arsenic excretion by the liver and providing partial protection against arsenic toxicity. It is also permeable to H2O2 in vivo. Could also be permeable to ammonium. In Mus musculus (Mouse), this protein is Aquaporin-9.